Here is a 1505-residue protein sequence, read N- to C-terminus: Probable RNA-directed RNA polymerase (1505 aa).

Belongs to the totiviridae RNA-directed RNA polymerase family.

The enzyme catalyses RNA(n) + a ribonucleoside 5'-triphosphate = RNA(n+1) + diphosphate. Its function is as follows. RNA-dependent RNA polymerase which replicates the viral genome. Catalyzes the transcription of fully conservative plus-strand genomic RNAs that are extruded from the virion into the cytoplasm where they function as mRNAs for translation of viral proteins and also as substrates for encapsidation to form new virions. Once encapsidated, the positive strand is converted to dsRNA by the RNA-directed RNA polymerase. Displays ssRNA-binding activity. This chain is Probable RNA-directed RNA polymerase (gag-pol), found in Saccharomyces cerevisiae virus L-A (ScV-L-A).